A 623-amino-acid chain; its full sequence is Adenine deaminase 2 (623 aa).

The protein belongs to the metallo-dependent hydrolases superfamily. Adenine deaminase family. Mn(2+) serves as cofactor.

It carries out the reaction adenine + H2O + H(+) = hypoxanthine + NH4(+). The polypeptide is Adenine deaminase 2 (Jannaschia sp. (strain CCS1)).